The chain runs to 353 residues: Phosphate acyltransferase (353 aa).

It belongs to the PlsX family. As to quaternary structure, homodimer. Probably interacts with PlsY.

It localises to the cytoplasm. It catalyses the reaction a fatty acyl-[ACP] + phosphate = an acyl phosphate + holo-[ACP]. It functions in the pathway lipid metabolism; phospholipid metabolism. Functionally, catalyzes the reversible formation of acyl-phosphate (acyl-PO(4)) from acyl-[acyl-carrier-protein] (acyl-ACP). This enzyme utilizes acyl-ACP as fatty acyl donor, but not acyl-CoA. This Afipia carboxidovorans (strain ATCC 49405 / DSM 1227 / KCTC 32145 / OM5) (Oligotropha carboxidovorans) protein is Phosphate acyltransferase.